The chain runs to 516 residues: Methionine--tRNA ligase (516 aa).

Positions 14-24 (SYPNGKPHIGH) match the 'HIGH' region motif. The 'KMSKS' region signature appears at 302–306 (KMSKS). Lysine 305 contributes to the ATP binding site.

Belongs to the class-I aminoacyl-tRNA synthetase family. MetG type 2B subfamily. As to quaternary structure, monomer.

It localises to the cytoplasm. It catalyses the reaction tRNA(Met) + L-methionine + ATP = L-methionyl-tRNA(Met) + AMP + diphosphate. In terms of biological role, is required not only for elongation of protein synthesis but also for the initiation of all mRNA translation through initiator tRNA(fMet) aminoacylation. In Rhizobium meliloti (strain 1021) (Ensifer meliloti), this protein is Methionine--tRNA ligase.